The sequence spans 508 residues: Maturase K (508 aa).

It belongs to the intron maturase 2 family. MatK subfamily.

It localises to the plastid. The protein resides in the chloroplast. Its function is as follows. Usually encoded in the trnK tRNA gene intron. Probably assists in splicing its own and other chloroplast group II introns. The protein is Maturase K of Chaetosphaeridium globosum (Charophycean green alga).